Here is a 428-residue protein sequence, read N- to C-terminus: MVSIPRGFRDFPPPMMILRKRVLSKIEEIFRRYGFDPIETPSLEYWETVKGKLGEEAENKLMFIFPDFFSKEWYTLRYELTFPLARYVAMHPETPLPFKRYHIGNVWRHEEPQKGRYREFLQCDADIVGSPYPEADAEVISVNIDAMKSFDFENFRVRLNDRRLLTGVFEEELGINNPFPIYRAIDKLDKIGVDGVKGELARLGAHESLIGRIMELISTRGSFNEISNTFRRIENDKVKVALDHLEEIFSIVSDDRLVFDLSLVRGLDYYTGPVFETSVSEPRIGSLAGGGRYDRLIGLYSGKDVPATGVSLGVERLIDAGLELGIFDLSERSYTDVFIVSVRRENWRYAWRISRILRERGFSTSLDLMRRSQSAQREYANKIGAKVIAFVGPSEEETETVTLYSRDLRKTVKISELIDSLREFLSVS.

It belongs to the class-II aminoacyl-tRNA synthetase family.

It is found in the cytoplasm. The enzyme catalyses tRNA(His) + L-histidine + ATP = L-histidyl-tRNA(His) + AMP + diphosphate + H(+). This is Histidine--tRNA ligase from Korarchaeum cryptofilum (strain OPF8).